Consider the following 290-residue polypeptide: Phosphate import ATP-binding protein PstB (290 aa).

The ABC transporter domain occupies 25 to 285 (LEARNLDFYY…PKTRRARDYL (261 aa)). ATP is bound at residue 57-64 (GPSGCGKS).

The protein belongs to the ABC transporter superfamily. Phosphate importer (TC 3.A.1.7) family. As to quaternary structure, the complex is composed of two ATP-binding proteins (PstB), two transmembrane proteins (PstC and PstA) and a solute-binding protein (PstS).

Its subcellular location is the cell inner membrane. It carries out the reaction phosphate(out) + ATP + H2O = ADP + 2 phosphate(in) + H(+). Part of the ABC transporter complex PstSACB involved in phosphate import. Responsible for energy coupling to the transport system. The polypeptide is Phosphate import ATP-binding protein PstB (Zymomonas mobilis subsp. mobilis (strain ATCC 31821 / ZM4 / CP4)).